A 70-amino-acid chain; its full sequence is Conotoxin TsMLKM-011 (70 aa).

A signal peptide spans 1 to 24; it reads MLKMGVVLFVFLVLFPLATLQLDA. Residues 25–54 constitute a propeptide that is removed on maturation; it reads DQPVERYAENKQLVSPYERRQIILHALGQR. 3 cysteine pairs are disulfide-bonded: C56–C66, C57–C68, and C62–C69.

This sequence belongs to the conotoxin M superfamily. As to expression, expressed by the venom duct.

Its subcellular location is the secreted. This chain is Conotoxin TsMLKM-011, found in Conus tessulatus (Tessellate cone).